Here is a 236-residue protein sequence, read N- to C-terminus: MAPASSHREHQWTCNLVRGSRLLLLLVVSNLILCQGQAQHPPYCRNQPGKCQIPLQSLFDRATTVANYNSKLAGEMVNRFDEQYGQGINSESKVINCHTSSITTPNSKAEAINTEDKILFKLVISLLHSWDEPLHHAVTELANSKGTSPALLTKAQEIKEKAKVLVDGVEVIQKRIHPGEKNEPYPVWSEQSSLTSQDENVRRVAFYRLFHCLHRDSSKIYTYLRILKCRLTSCET.

An N-terminal signal peptide occupies residues 1–36; sequence MAPASSHREHQWTCNLVRGSRLLLLLVVSNLILCQG. Intrachain disulfides connect C44-C51, C97-C212, and C229-C234.

The protein belongs to the somatotropin/prolactin family.

The protein localises to the secreted. This Ovis aries (Sheep) protein is Chorionic somatomammotropin hormone (CSH).